The following is a 232-amino-acid chain: Large ribosomal subunit protein uL1 (232 aa).

This sequence belongs to the universal ribosomal protein uL1 family. Part of the 50S ribosomal subunit.

Its function is as follows. Binds directly to 23S rRNA. The L1 stalk is quite mobile in the ribosome, and is involved in E site tRNA release. Protein L1 is also a translational repressor protein, it controls the translation of the L11 operon by binding to its mRNA. In Colwellia psychrerythraea (strain 34H / ATCC BAA-681) (Vibrio psychroerythus), this protein is Large ribosomal subunit protein uL1.